Consider the following 389-residue polypeptide: Na(+)/H(+) antiporter NhaA 1 (389 aa).

The next 11 helical transmembrane spans lie at Val-12 to Val-32, Phe-62 to Leu-82, Ile-97 to Leu-117, Gly-128 to Gly-148, Ile-157 to Phe-177, Ile-184 to Gly-204, Ile-220 to Ile-240, Phe-260 to Ser-280, Ile-282 to Gly-302, Leu-331 to Leu-351, and Leu-365 to Phe-385.

Belongs to the NhaA Na(+)/H(+) (TC 2.A.33) antiporter family.

It localises to the cell inner membrane. The catalysed reaction is Na(+)(in) + 2 H(+)(out) = Na(+)(out) + 2 H(+)(in). Its function is as follows. Na(+)/H(+) antiporter that extrudes sodium in exchange for external protons. The polypeptide is Na(+)/H(+) antiporter NhaA 1 (Campylobacter jejuni (strain RM1221)).